The sequence spans 130 residues: Large ribosomal subunit protein bL12 (130 aa).

Belongs to the bacterial ribosomal protein bL12 family. Homodimer. Part of the ribosomal stalk of the 50S ribosomal subunit. Forms a multimeric L10(L12)X complex, where L10 forms an elongated spine to which 2 to 4 L12 dimers bind in a sequential fashion. Binds GTP-bound translation factors.

Its function is as follows. Forms part of the ribosomal stalk which helps the ribosome interact with GTP-bound translation factors. Is thus essential for accurate translation. The sequence is that of Large ribosomal subunit protein bL12 from Parafrankia sp. (strain EAN1pec).